We begin with the raw amino-acid sequence, 435 residues long: 5-methylthioadenosine/S-adenosylhomocysteine deaminase (435 aa).

Residues His65 and His67 each contribute to the Zn(2+) site. Positions 94, 150, and 189 each coordinate substrate. Residue His216 coordinates Zn(2+). Residues Glu219 and Asp304 each coordinate substrate. A Zn(2+)-binding site is contributed by Asp304.

It belongs to the metallo-dependent hydrolases superfamily. MTA/SAH deaminase family. Requires Zn(2+) as cofactor.

It catalyses the reaction S-adenosyl-L-homocysteine + H2O + H(+) = S-inosyl-L-homocysteine + NH4(+). It carries out the reaction S-methyl-5'-thioadenosine + H2O + H(+) = S-methyl-5'-thioinosine + NH4(+). In terms of biological role, catalyzes the deamination of 5-methylthioadenosine and S-adenosyl-L-homocysteine into 5-methylthioinosine and S-inosyl-L-homocysteine, respectively. Is also able to deaminate adenosine. This chain is 5-methylthioadenosine/S-adenosylhomocysteine deaminase, found in Bacillus cereus (strain ATCC 14579 / DSM 31 / CCUG 7414 / JCM 2152 / NBRC 15305 / NCIMB 9373 / NCTC 2599 / NRRL B-3711).